Consider the following 268-residue polypeptide: Shikimate dehydrogenase (NADP(+)) (268 aa).

Residues 14 to 16 (SKS) and T61 contribute to the shikimate site. K65 functions as the Proton acceptor in the catalytic mechanism. Residues N86 and D102 each contribute to the shikimate site. Residues 126–130 (GAGGA), 149–154 (NRTFSK), and M213 each bind NADP(+). Y215 contributes to the shikimate binding site. G238 serves as a coordination point for NADP(+).

This sequence belongs to the shikimate dehydrogenase family. As to quaternary structure, homodimer.

The catalysed reaction is shikimate + NADP(+) = 3-dehydroshikimate + NADPH + H(+). It participates in metabolic intermediate biosynthesis; chorismate biosynthesis; chorismate from D-erythrose 4-phosphate and phosphoenolpyruvate: step 4/7. Involved in the biosynthesis of the chorismate, which leads to the biosynthesis of aromatic amino acids. Catalyzes the reversible NADPH linked reduction of 3-dehydroshikimate (DHSA) to yield shikimate (SA). This Haemophilus influenzae (strain PittEE) protein is Shikimate dehydrogenase (NADP(+)).